We begin with the raw amino-acid sequence, 161 residues long: Probable calcium-binding protein CML16 (161 aa).

4 EF-hand domains span residues 8–43 (DQIK…LGIK), 44–79 (PRGD…DINE), 83–118 (INQE…MGHP), and 119–154 (LTYR…SAAD). Ca(2+) is bound by residues D21, D23, D25, S27, E32, D57, N59, N61, S63, E68, D96, D98, N100, S102, E107, D132, N134, D136, and E143.

Its function is as follows. Potential calcium sensor. This is Probable calcium-binding protein CML16 (CML16) from Arabidopsis thaliana (Mouse-ear cress).